The primary structure comprises 152 residues: SsrA-binding protein (152 aa).

This sequence belongs to the SmpB family.

Its subcellular location is the cytoplasm. Functionally, required for rescue of stalled ribosomes mediated by trans-translation. Binds to transfer-messenger RNA (tmRNA), required for stable association of tmRNA with ribosomes. tmRNA and SmpB together mimic tRNA shape, replacing the anticodon stem-loop with SmpB. tmRNA is encoded by the ssrA gene; the 2 termini fold to resemble tRNA(Ala) and it encodes a 'tag peptide', a short internal open reading frame. During trans-translation Ala-aminoacylated tmRNA acts like a tRNA, entering the A-site of stalled ribosomes, displacing the stalled mRNA. The ribosome then switches to translate the ORF on the tmRNA; the nascent peptide is terminated with the 'tag peptide' encoded by the tmRNA and targeted for degradation. The ribosome is freed to recommence translation, which seems to be the essential function of trans-translation. This chain is SsrA-binding protein, found in Rickettsia africae (strain ESF-5).